Here is a 296-residue protein sequence, read N- to C-terminus: Light-independent protochlorophyllide reductase iron-sulfur ATP-binding protein (296 aa).

ATP-binding positions include 10–15 and K39; that span reads GIGKST. Residue S14 participates in Mg(2+) binding. [4Fe-4S] cluster is bound by residues C95 and C129. Position 180–181 (180–181) interacts with ATP; the sequence is NR.

It belongs to the NifH/BchL/ChlL family. As to quaternary structure, homodimer. Protochlorophyllide reductase is composed of three subunits; ChlL, ChlN and ChlB. [4Fe-4S] cluster is required as a cofactor.

It localises to the plastid. The protein localises to the chloroplast. The enzyme catalyses chlorophyllide a + oxidized 2[4Fe-4S]-[ferredoxin] + 2 ADP + 2 phosphate = protochlorophyllide a + reduced 2[4Fe-4S]-[ferredoxin] + 2 ATP + 2 H2O. It participates in porphyrin-containing compound metabolism; chlorophyll biosynthesis (light-independent). In terms of biological role, component of the dark-operative protochlorophyllide reductase (DPOR) that uses Mg-ATP and reduced ferredoxin to reduce ring D of protochlorophyllide (Pchlide) to form chlorophyllide a (Chlide). This reaction is light-independent. The L component serves as a unique electron donor to the NB-component of the complex, and binds Mg-ATP. This Mesostigma viride (Green alga) protein is Light-independent protochlorophyllide reductase iron-sulfur ATP-binding protein.